The sequence spans 230 residues: Small ribosomal subunit protein uS3c (230 aa).

One can recognise a KH type-2 domain in the interval 39-109; sequence IRSFIHSKLS…QLRVNVVEIA (71 aa).

This sequence belongs to the universal ribosomal protein uS3 family. As to quaternary structure, part of the 30S ribosomal subunit.

It is found in the plastid. The protein resides in the chloroplast. This chain is Small ribosomal subunit protein uS3c (rps3), found in Pyropia yezoensis (Susabi-nori).